The chain runs to 846 residues: Outer membrane channel protein CpnT (846 aa).

An NTD region spans residues 1–443 (MAPLAVDPAA…AGVRGLKERL (443 aa)). The interval 442 to 630 (RLEPTTPHLE…SGSEPPGLHA (189 aa)) is disordered. Composition is skewed to pro residues over residues 450-466 (LEPP…PPRI) and 475-504 (APAP…PPVD). Composition is skewed to low complexity over residues 508 to 517 (EPVAPSSASA) and 562 to 586 (APAT…HSTP). The TNT stretch occupies residues 651-846 (RLSDEAVDPQ…ELIRRGVLRQ (196 aa)). The region spanning 751-846 (YGPQLDRIGG…ELIRRGVLRQ (96 aa)) is the TNT domain. Residue Arg757 is part of the active site. Arg780 contributes to the NAD(+) binding site. The active site involves Gln822.

As to quaternary structure, interacts with the immunity factor for TNT (IFT) homolog. In terms of processing, the C-terminal domain (TNT) is probably cleaved.

The protein localises to the cell outer membrane. It is found in the secreted. The protein resides in the cell surface. It carries out the reaction NAD(+) + H2O = ADP-D-ribose + nicotinamide + H(+). With respect to regulation, glycohydrolase activity is completely inhibited by interaction with the immunity factor for TNT (IFT) homolog. This inhibition protects M.bovis from self-poisoning. In terms of biological role, the N-terminal domain (NTD) forms an outer membrane channel and is used for uptake of nutrients across the outer membrane. Also confers susceptibility to structurally different antibiotics and antituberculosis drugs, and to toxic immune factors such as nitric oxide (NO). The C-terminal domain (TNT) is dispensable for normal growth in macrophages. This Mycobacterium bovis (strain BCG / Pasteur 1173P2) protein is Outer membrane channel protein CpnT.